A 411-amino-acid chain; its full sequence is Serine--tRNA ligase (411 aa).

L-serine is bound at residue 226 to 228; sequence TSE. 257–259 contributes to the ATP binding site; it reads RKE. Residue glutamate 280 participates in L-serine binding. 344-347 is an ATP binding site; it reads EISS. Position 379 (serine 379) interacts with L-serine.

The protein belongs to the class-II aminoacyl-tRNA synthetase family. Type-1 seryl-tRNA synthetase subfamily. In terms of assembly, homodimer. The tRNA molecule binds across the dimer.

Its subcellular location is the cytoplasm. It catalyses the reaction tRNA(Ser) + L-serine + ATP = L-seryl-tRNA(Ser) + AMP + diphosphate + H(+). The enzyme catalyses tRNA(Sec) + L-serine + ATP = L-seryl-tRNA(Sec) + AMP + diphosphate + H(+). It participates in aminoacyl-tRNA biosynthesis; selenocysteinyl-tRNA(Sec) biosynthesis; L-seryl-tRNA(Sec) from L-serine and tRNA(Sec): step 1/1. Catalyzes the attachment of serine to tRNA(Ser). Is also able to aminoacylate tRNA(Sec) with serine, to form the misacylated tRNA L-seryl-tRNA(Sec), which will be further converted into selenocysteinyl-tRNA(Sec). This chain is Serine--tRNA ligase, found in Campylobacter jejuni subsp. jejuni serotype O:2 (strain ATCC 700819 / NCTC 11168).